A 158-amino-acid polypeptide reads, in one-letter code: U4/U6.U5 small nuclear ribonucleoprotein 27 kDa protein (158 aa).

The segment covering 1 to 30 (MGRSRSRTPPRRERRRSRSSSRDRERRRRE) has biased composition (basic residues). The tract at residues 1–100 (MGRSRSRTPP…ISAEDMQGKT (100 aa)) is disordered. Over residues 31–41 (RERSRSRDRDR) the composition is skewed to basic and acidic residues. The segment covering 42–62 (RRSRSRSPHRRRSRSPRRHRS) has biased composition (basic residues). A compositionally biased stretch (basic and acidic residues) spans 69 to 86 (RQKDRRDDDRKDVKEKPA).

This sequence belongs to the SNUT3 family. In terms of assembly, part of a tri-snRNP complex.

It localises to the nucleus. Functionally, may play a role in mRNA splicing. This Danio rerio (Zebrafish) protein is U4/U6.U5 small nuclear ribonucleoprotein 27 kDa protein (snrnp27).